Reading from the N-terminus, the 125-residue chain is Desulfoferrodoxin (125 aa).

5 residues coordinate Fe cation: histidine 49, histidine 69, histidine 75, cysteine 115, and histidine 118.

This sequence belongs to the desulfoferrodoxin family. Requires Cu(2+) as cofactor.

It carries out the reaction reduced [rubredoxin] + superoxide + 2 H(+) = oxidized [rubredoxin] + H2O2. Its function is as follows. Catalyzes the reduction of superoxide to hydrogen peroxide, using electrons from NADH and NADH:rubredoxin oxidoreductase (NROR) and rubredoxin (Rd) as electron transport intermediaries between NADH and Dfx. Is a key factor in the superoxide reductase dependent part of a pathway for detoxification of reactive oxygen species (ROS) in C.acetobutylicum, an obligate anaerobic bacterium. This Clostridium acetobutylicum (strain ATCC 824 / DSM 792 / JCM 1419 / IAM 19013 / LMG 5710 / NBRC 13948 / NRRL B-527 / VKM B-1787 / 2291 / W) protein is Desulfoferrodoxin (dfx).